We begin with the raw amino-acid sequence, 246 residues long: Pyridoxine 5'-phosphate synthase (246 aa).

N10 contributes to the 3-amino-2-oxopropyl phosphate binding site. 12–13 (DH) is a binding site for 1-deoxy-D-xylulose 5-phosphate. R21 serves as a coordination point for 3-amino-2-oxopropyl phosphate. The active-site Proton acceptor is the H46. Residues R48 and H53 each contribute to the 1-deoxy-D-xylulose 5-phosphate site. E73 serves as the catalytic Proton acceptor. T103 lines the 1-deoxy-D-xylulose 5-phosphate pocket. Catalysis depends on H193, which acts as the Proton donor. 3-amino-2-oxopropyl phosphate contacts are provided by residues G194 and 215–216 (GH).

Belongs to the PNP synthase family. In terms of assembly, homooctamer; tetramer of dimers.

It localises to the cytoplasm. The enzyme catalyses 3-amino-2-oxopropyl phosphate + 1-deoxy-D-xylulose 5-phosphate = pyridoxine 5'-phosphate + phosphate + 2 H2O + H(+). The protein operates within cofactor biosynthesis; pyridoxine 5'-phosphate biosynthesis; pyridoxine 5'-phosphate from D-erythrose 4-phosphate: step 5/5. In terms of biological role, catalyzes the complicated ring closure reaction between the two acyclic compounds 1-deoxy-D-xylulose-5-phosphate (DXP) and 3-amino-2-oxopropyl phosphate (1-amino-acetone-3-phosphate or AAP) to form pyridoxine 5'-phosphate (PNP) and inorganic phosphate. The polypeptide is Pyridoxine 5'-phosphate synthase (Rhodopirellula baltica (strain DSM 10527 / NCIMB 13988 / SH1)).